The primary structure comprises 366 residues: Tudor domain-containing protein 10 (366 aa).

Residues 34–107 (TEVYVGNLPL…RKLFVNTSKR (74 aa)) form the RRM domain. In terms of domain architecture, Tudor spans 210 to 317 (FWAMHVTEAL…PLTQPFMLEK (108 aa)). Residues 216–237 (TEALHQNMQALFSTLAQAEEQQ) are a coiled coil.

In Homo sapiens (Human), this protein is Tudor domain-containing protein 10 (TDRD10).